The chain runs to 464 residues: Alpha-2A adrenergic receptor (464 aa).

The Extracellular portion of the chain corresponds to 1-47 (MFRQEQRWPRQLWPMGSLQPDSGNASWNGTEGPGGGTRATPYSLQVT). The tract at residues 13 to 34 (WPMGSLQPDSGNASWNGTEGPG) is disordered. A compositionally biased stretch (polar residues) spans 19–29 (QPDSGNASWNG). N-linked (GlcNAc...) asparagine glycans are attached at residues Asn-24 and Asn-28. Residues 48–73 (VTLVCLVGLLILLTVFGNVLVIIAVF) traverse the membrane as a helical segment. Topologically, residues 74–84 (TSRALKAPQNL) are cytoplasmic. The helical transmembrane segment at 85–110 (FLVSLASADILVATLVIPFSLANEVM) threads the bilayer. Residues 111 to 120 (GYWYFGKAWC) are Extracellular-facing. The cysteines at positions 120 and 201 are disulfide-linked. A helical transmembrane segment spans residues 121 to 143 (EIYLALDVLFCTSSIVHLCAISL). Residues 144 to 163 (DRYWSITQAIEYNLKRTPRR) are Cytoplasmic-facing. A helical transmembrane segment spans residues 164–187 (IKAIIVTVWVISAVISFPPLISFE). At 188–206 (KAGGGGQQPAEPRCEINDQ) the chain is on the extracellular side. Residues 207-231 (KWYVISSSIGSFFAPCLIMILVYVR) form a helical membrane-spanning segment. Residues 232 to 388 (IYQIAKRRTR…RQNREKRFTF (157 aa)) are Cytoplasmic-facing. A disordered region spans residues 240 to 378 (TRVPPSRRGP…GGAKASRWRG (139 aa)). Residues 251 to 268 (AHAAAPPGGAERRPNGLG) show a composition bias toward low complexity. Residues 312–329 (SSEHAERPPGARRPERGL) are compositionally biased toward basic and acidic residues. Residue Ser-345 is modified to Phosphoserine. Gly residues predominate over residues 354-363 (AGSGTSGSGP). Arg-367 bears the Omega-N-methylarginine mark. A helical transmembrane segment spans residues 389-413 (VLAVVIGVFVVCWFPFFFTYTLTAV). Residues 414–423 (GCSVPRTLFK) are Extracellular-facing. The chain crosses the membrane as a helical span at residues 424-444 (FFFWFGYCNSSLNPVIYTIFN). The Cytoplasmic portion of the chain corresponds to 445–464 (HDFRRAFKKILCRGDRKRIV). Cys-456 carries S-palmitoyl cysteine lipidation.

It belongs to the G-protein coupled receptor 1 family. Adrenergic receptor subfamily. ADRA2A sub-subfamily. Component of the ADA2A-containing complex (ATAC), composed of KAT14, KAT2A, TADA2L, TADA3L, ZZ3, MBIP, WDR5, YEATS2, CCDC101 and DR1.

Its subcellular location is the cell membrane. Its function is as follows. Alpha-2 adrenergic receptors mediate the catecholamine-induced inhibition of adenylate cyclase through the action of G proteins. Component of the ATAC complex, a complex with histone acetyltransferase activity on histones H3 and H4. The polypeptide is Alpha-2A adrenergic receptor (Cavia porcellus (Guinea pig)).